The following is a 213-amino-acid chain: Kynurenine formamidase (213 aa).

Tryptophan 18 is a binding site for substrate. Histidine 48, histidine 52, and aspartate 54 together coordinate Zn(2+). Catalysis depends on histidine 58, which acts as the Proton donor/acceptor. Zn(2+)-binding residues include histidine 160 and glutamate 172.

It belongs to the Cyclase 1 superfamily. KynB family. In terms of assembly, homodimer. Zn(2+) is required as a cofactor.

The enzyme catalyses N-formyl-L-kynurenine + H2O = L-kynurenine + formate + H(+). Its pathway is amino-acid degradation; L-tryptophan degradation via kynurenine pathway; L-kynurenine from L-tryptophan: step 2/2. Its function is as follows. Catalyzes the hydrolysis of N-formyl-L-kynurenine to L-kynurenine, the second step in the kynurenine pathway of tryptophan degradation. The sequence is that of Kynurenine formamidase from Burkholderia cenocepacia (strain HI2424).